The following is a 303-amino-acid chain: uncharacterized protein (303 aa).

A run of 4 helical transmembrane segments spans residues 55-77 (FLVK…LFIQ), 92-111 (PAVF…TKII), 208-230 (FSLP…ATSL), and 240-257 (IPHI…KILI).

It localises to the cell membrane. This is an uncharacterized protein from Bacillus subtilis (strain 168).